The primary structure comprises 360 residues: Phospho-N-acetylmuramoyl-pentapeptide-transferase (360 aa).

Transmembrane regions (helical) follow at residues 21 to 41 (YVTF…LWWG), 74 to 94 (MGGI…GDLA), 97 to 117 (YVWV…IDDY), 135 to 155 (ILQS…ADLV), 168 to 188 (IMPQ…VGSS), 199 to 219 (GLAI…AYLS), 236 to 256 (AGEL…FLWF), 263 to 283 (VFMG…IAVL), 288 to 308 (ILLV…ILQV), and 338 to 358 (VIVR…ATLK).

This sequence belongs to the glycosyltransferase 4 family. MraY subfamily. Requires Mg(2+) as cofactor.

Its subcellular location is the cell inner membrane. It catalyses the reaction UDP-N-acetyl-alpha-D-muramoyl-L-alanyl-gamma-D-glutamyl-meso-2,6-diaminopimeloyl-D-alanyl-D-alanine + di-trans,octa-cis-undecaprenyl phosphate = di-trans,octa-cis-undecaprenyl diphospho-N-acetyl-alpha-D-muramoyl-L-alanyl-D-glutamyl-meso-2,6-diaminopimeloyl-D-alanyl-D-alanine + UMP. The protein operates within cell wall biogenesis; peptidoglycan biosynthesis. Its function is as follows. Catalyzes the initial step of the lipid cycle reactions in the biosynthesis of the cell wall peptidoglycan: transfers peptidoglycan precursor phospho-MurNAc-pentapeptide from UDP-MurNAc-pentapeptide onto the lipid carrier undecaprenyl phosphate, yielding undecaprenyl-pyrophosphoryl-MurNAc-pentapeptide, known as lipid I. The protein is Phospho-N-acetylmuramoyl-pentapeptide-transferase of Shewanella sediminis (strain HAW-EB3).